The following is a 582-amino-acid chain: ATP-dependent lipid A-core flippase (582 aa).

5 helical membrane-spanning segments follow: residues 25 to 45, 64 to 84, 142 to 162, 165 to 185, and 253 to 273; these read WFML…QAGA, VLIV…GQFM, AIIV…FLLW, WKLT…MNIT, and VIVQ…YIHL. Residues 29 to 309 form the ABC transmembrane type-1 domain; the sequence is VISVIGYALY…LTDVNVKVQR (281 aa). One can recognise an ABC transporter domain in the interval 342-577; the sequence is IDFEGVSFGY…NGLYTQMYRM (236 aa). Position 375-382 (375-382) interacts with ATP; it reads GRSGAGKS.

This sequence belongs to the ABC transporter superfamily. Lipid exporter (TC 3.A.1.106) family. In terms of assembly, homodimer.

The protein localises to the cell inner membrane. It carries out the reaction ATP + H2O + lipid A-core oligosaccharideSide 1 = ADP + phosphate + lipid A-core oligosaccharideSide 2.. Its function is as follows. Involved in lipopolysaccharide (LPS) biosynthesis. Translocates lipid A-core from the inner to the outer leaflet of the inner membrane. Transmembrane domains (TMD) form a pore in the inner membrane and the ATP-binding domain (NBD) is responsible for energy generation. In Alcanivorax borkumensis (strain ATCC 700651 / DSM 11573 / NCIMB 13689 / SK2), this protein is ATP-dependent lipid A-core flippase.